A 279-amino-acid polypeptide reads, in one-letter code: 2-dehydro-3-deoxyphosphooctonate aldolase (279 aa).

The protein belongs to the KdsA family.

It localises to the cytoplasm. The catalysed reaction is D-arabinose 5-phosphate + phosphoenolpyruvate + H2O = 3-deoxy-alpha-D-manno-2-octulosonate-8-phosphate + phosphate. It functions in the pathway carbohydrate biosynthesis; 3-deoxy-D-manno-octulosonate biosynthesis; 3-deoxy-D-manno-octulosonate from D-ribulose 5-phosphate: step 2/3. Its pathway is bacterial outer membrane biogenesis; lipopolysaccharide biosynthesis. In Bartonella henselae (strain ATCC 49882 / DSM 28221 / CCUG 30454 / Houston 1) (Rochalimaea henselae), this protein is 2-dehydro-3-deoxyphosphooctonate aldolase.